Consider the following 86-residue polypeptide: MKPGIHPEYRKVVFHDTSVDHYFVVGSTLQTDRTIEWEDGQTYPYFTIEVSSESHPFYTGKQRVVQKEGRVANFNRRFAQFGSKEG.

Belongs to the bacterial ribosomal protein bL31 family. Type B subfamily. As to quaternary structure, part of the 50S ribosomal subunit.

The chain is Large ribosomal subunit protein bL31B from Vibrio vulnificus (strain YJ016).